The chain runs to 1014 residues: MMRLSSYLRRFRWLVFTGWLLALVPAIYLAMTQSGKLTGGGFEVAGSQSLLVHDQLQEQYPDQGAVSLALVAAPRSDASYQDMNDAVALLRRIVSEFPGVSEVPNPTQLPPRPDRPYGVSLRLDDRNSVTSDVAKQLRTKVGIKGDQAGRTANGKVRLYVIGQGALSAAVAANSKHDIAEAERWNLPIILIVLLAVFGSLAAAAVPLALGVCTVVVTMGLVDLVSMHTIMSVFVTSTVSMFGIALAVDYSLFILMRFREELRSGRQPQEAVDAAMATSGLAVVLSGMTVIASLTGIYLINTAALKSMATGAILAVAIAMLASITLTPAALATFGRAAVKRSVLMHWSQRSECTQSLFWTRWVGWVMHRPWISASAASTILIIMATPVTSMMLGNSLLRQFNSSHEIRAGVAAAAQALGPGALGPVQVLITFPDDPNTQASSPKHRQTIGAIRNRMLQAKNVMSVAPPQFADNNCSALLGAVLSVDPEDLGARETVDWMRTELPKVPGAAHVNVGGPTALINDFDDRVAKTEPLMLVFVALIAFVMLLISIRSVFLAFKGVLMTLLSVAAAYGSLVMVFQWGWLENLGFTHINSIDSTVPPLVLAMTFGLSMDYEIFLLTRIRERFLQTGHTRDAVAYGVSTSARTITSAALIMIAVFVGFAFAGMPLVAEIGVACAVAIAVDVTAVRLVLVPTLMAMFAQWNWWLPRWLSRALPAVDFDKPFPPVDLNEIVVLPADISATKVPCGDLRMVLKLAAKLKNLAPDAICVADPLAFTGCGRNNKRSDRVLPGAATQESEEDPAMGKASDSTAALTAAQVGPVTRTNGHWTARNLVIGLTHRNSITRVMPWSDRPVHPFTLWRSRFSVAIDALEAHIAVQADAPDQPNYQRCSPVETAHVQLPTGDRLLIPTGAETLRLVSYLIMCRNSIRDYAELADMVDAIEPETAAVVLTELDRYYSCQLPMRQWMATQLVRRLSDPHPVDLTEDQWSDPDNKAEWQDVRQRCLSVAVAMLEEAR.

Transmembrane regions (helical) follow at residues 13 to 33 (WLVFTGWLLALVPAIYLAMTQ), 156 to 173 (VRLYVIGQGALSAAVAAN), 188 to 208 (IILIVLLAVFGSLAAAAVPLA), 235 to 255 (TSTVSMFGIALAVDYSLFILM), 279 to 299 (GLAVVLSGMTVIASLTGIYLI), 311 to 331 (AILAVAIAMLASITLTPAALA), 373 to 393 (ASAASTILIIMATPVTSMMLG), 530 to 550 (TEPLMLVFVALIAFVMLLISI), 560 to 580 (VLMTLLSVAAAYGSLVMVFQW), 598 to 618 (VPPLVLAMTFGLSMDYEIFLL), 649 to 669 (AALIMIAVFVGFAFAGMPLVA), and 671 to 691 (IGVACAVAIAVDVTAVRLVLV). The interval 783-802 (SDRVLPGAATQESEEDPAMG) is disordered.

This sequence belongs to the resistance-nodulation-cell division (RND) (TC 2.A.6) family. MmpL subfamily.

It localises to the cell membrane. The sequence is that of Probable transport protein MmpL11 (mmpL11) from Mycobacterium leprae (strain TN).